The primary structure comprises 476 residues: Sulfate adenylyltransferase subunit 1 (476 aa).

Residues Lys24 to Lys240 enclose the tr-type G domain. Residues Gly33–Ser40 form a G1 region. A GTP-binding site is contributed by Gly33–Ser40. A G2 region spans residues Gly91–Asp95. Residues Asp112–Gly115 form a G3 region. GTP-binding positions include Asp112–His116 and Asn167–Asp170. The segment at Asn167–Asp170 is G4. The tract at residues Ser205–Leu207 is G5.

It belongs to the TRAFAC class translation factor GTPase superfamily. Classic translation factor GTPase family. CysN/NodQ subfamily. In terms of assembly, heterodimer composed of CysD, the smaller subunit, and CysN.

It catalyses the reaction sulfate + ATP + H(+) = adenosine 5'-phosphosulfate + diphosphate. It participates in sulfur metabolism; hydrogen sulfide biosynthesis; sulfite from sulfate: step 1/3. In terms of biological role, with CysD forms the ATP sulfurylase (ATPS) that catalyzes the adenylation of sulfate producing adenosine 5'-phosphosulfate (APS) and diphosphate, the first enzymatic step in sulfur assimilation pathway. APS synthesis involves the formation of a high-energy phosphoric-sulfuric acid anhydride bond driven by GTP hydrolysis by CysN coupled to ATP hydrolysis by CysD. The chain is Sulfate adenylyltransferase subunit 1 from Vibrio cholerae serotype O1 (strain ATCC 39541 / Classical Ogawa 395 / O395).